The chain runs to 571 residues: E3 ubiquitin-protein ligase RNF168 (571 aa).

Residues 16 to 55 (CGICMEILVEPVTLPCNHTLCKPCFQSTVEKASLCCPFCR) form an RING-type zinc finger. A Phosphoserine modification is found at serine 70. An LR motif 1 motif is present at residues 110–128 (LSKPGELRREYEEEISKVA). Residue serine 134 is modified to Phosphoserine. A UMI motif motif is present at residues 143–151 (EEYIQRLLA). 2 disordered regions span residues 151 to 174 (AEEE…QLKS) and 191 to 292 (EGSI…GADS). Positions 168 to 191 (MEEQLKSDEELARKLSIDINNFCE) match the MIU motif 1 motif. At serine 197 the chain carries Phosphoserine. The span at 202–214 (RKSDPVTPKSEKK) shows a compositional bias: basic and acidic residues. Lysine 210 is covalently cross-linked (Glycyl lysine isopeptide (Lys-Gly) (interchain with G-Cter in SUMO2)). The span at 231-242 (PKSQFGSASHSE) shows a compositional bias: polar residues. The segment covering 243–263 (AVQEVRKDSVSKDIDSSDRKS) has biased composition (basic and acidic residues). Phosphothreonine is present on threonine 362. 2 disordered regions span residues 390–422 (NQES…EETE) and 459–560 (KEQM…ISQK). Phosphoserine occurs at positions 411, 414, and 415. An MIU motif 2 motif is present at residues 439–462 (RHKQEEQDRLLALQLQKEVDKEQM). Positions 466 to 477 (RQKGSPDEYHLR) match the LR motif 2 motif. Serine 470 bears the Phosphoserine mark. A compositionally biased stretch (basic and acidic residues) spans 508–519 (PTPERGSRDKNR). 2 stretches are compositionally biased toward polar residues: residues 520-530 (QVSLKMQLKQS) and 549-560 (SAHSLQPSISQK). Residue lysine 528 forms a Glycyl lysine isopeptide (Lys-Gly) (interchain with G-Cter in SUMO2) linkage.

It belongs to the RNF168 family. Monomer. Interacts with UBE2N/UBC13. Post-translationally, sumoylated with SUMO1 by PIAS4 in response to double-strand breaks (DSBs). In terms of processing, ubiquitinated.

It localises to the nucleus. The enzyme catalyses S-ubiquitinyl-[E2 ubiquitin-conjugating enzyme]-L-cysteine + [acceptor protein]-L-lysine = [E2 ubiquitin-conjugating enzyme]-L-cysteine + N(6)-ubiquitinyl-[acceptor protein]-L-lysine.. It participates in protein modification; protein ubiquitination. E3 ubiquitin-protein ligase required for accumulation of repair proteins to sites of DNA damage. Acts with UBE2N/UBC13 to amplify the RNF8-dependent histone ubiquitination. Recruited to sites of DNA damage at double-strand breaks (DSBs) by binding to ubiquitinated histone H2A and H2AX and amplifies the RNF8-dependent H2A ubiquitination, promoting the formation of 'Lys-63'-linked ubiquitin conjugates. This leads to concentrate ubiquitinated histones H2A and H2AX at DNA lesions to the threshold required for recruitment of TP53BP1 and BRCA1. Also recruited at DNA interstrand cross-links (ICLs) sites and promotes accumulation of 'Lys-63'-linked ubiquitination of histones H2A and H2AX, leading to recruitment of FAAP20/C1orf86 and Fanconi anemia (FA) complex, followed by interstrand cross-link repair. H2A ubiquitination also mediates the ATM-dependent transcriptional silencing at regions flanking DSBs in cis, a mechanism to avoid collision between transcription and repair intermediates. Also involved in class switch recombination in immune system, via its role in regulation of DSBs repair. Following DNA damage, promotes the ubiquitination and degradation of JMJD2A/KDM4A in collaboration with RNF8, leading to unmask H4K20me2 mark and promote the recruitment of TP53BP1 at DNA damage sites. Not able to initiate 'Lys-63'-linked ubiquitination in vitro; possibly due to partial occlusion of the UBE2N/UBC13-binding region. Catalyzes monoubiquitination of 'Lys-13' and 'Lys-15' of nucleosomal histone H2A (H2AK13Ub and H2AK15Ub, respectively). This chain is E3 ubiquitin-protein ligase RNF168, found in Homo sapiens (Human).